The primary structure comprises 156 residues: uncharacterized protein (156 aa).

It localises to the mitochondrion. This is an uncharacterized protein from Paramecium tetraurelia.